Consider the following 548-residue polypeptide: ATP synthase subunit alpha, mitochondrial (548 aa).

209–216 (GDRQTGKT) is a binding site for ATP.

Belongs to the ATPase alpha/beta chains family. In terms of assembly, F-type ATPases have 2 components, CF(1) - the catalytic core - and CF(0) - the membrane proton channel. CF(1) has five subunits: alpha(3), beta(3), gamma(1), delta(1), epsilon(1). CF(0) has three main subunits: a, b and c.

It is found in the mitochondrion. The protein localises to the mitochondrion inner membrane. Functionally, mitochondrial membrane ATP synthase (F(1)F(0) ATP synthase or Complex V) produces ATP from ADP in the presence of a proton gradient across the membrane which is generated by electron transport complexes of the respiratory chain. F-type ATPases consist of two structural domains, F(1) - containing the extramembraneous catalytic core, and F(0) - containing the membrane proton channel, linked together by a central stalk and a peripheral stalk. During catalysis, ATP synthesis in the catalytic domain of F(1) is coupled via a rotary mechanism of the central stalk subunits to proton translocation. Subunits alpha and beta form the catalytic core in F(1). Rotation of the central stalk against the surrounding alpha(3)beta(3) subunits leads to hydrolysis of ATP in three separate catalytic sites on the beta subunits. Subunit alpha does not bear the catalytic high-affinity ATP-binding sites. This Kluyveromyces lactis (strain ATCC 8585 / CBS 2359 / DSM 70799 / NBRC 1267 / NRRL Y-1140 / WM37) (Yeast) protein is ATP synthase subunit alpha, mitochondrial (ATP1).